A 426-amino-acid polypeptide reads, in one-letter code: Diaminobutyrate--2-oxoglutarate transaminase (426 aa).

Residue Lys272 is modified to N6-(pyridoxal phosphate)lysine.

Belongs to the class-III pyridoxal-phosphate-dependent aminotransferase family. Pyridoxal 5'-phosphate serves as cofactor.

It carries out the reaction L-2,4-diaminobutanoate + 2-oxoglutarate = L-aspartate 4-semialdehyde + L-glutamate. Its pathway is amine and polyamine biosynthesis; ectoine biosynthesis; L-ectoine from L-aspartate 4-semialdehyde: step 1/3. Functionally, catalyzes reversively the conversion of L-aspartate beta-semialdehyde (ASA) to L-2,4-diaminobutyrate (DABA) by transamination with L-glutamate. The sequence is that of Diaminobutyrate--2-oxoglutarate transaminase (ectB) from Sporosarcina pasteurii (Bacillus pasteurii).